A 584-amino-acid polypeptide reads, in one-letter code: 2-succinyl-5-enolpyruvyl-6-hydroxy-3-cyclohexene-1-carboxylate synthase (584 aa).

This sequence belongs to the TPP enzyme family. MenD subfamily. Homodimer. The cofactor is Mg(2+). Mn(2+) serves as cofactor. Requires thiamine diphosphate as cofactor.

It catalyses the reaction isochorismate + 2-oxoglutarate + H(+) = 5-enolpyruvoyl-6-hydroxy-2-succinyl-cyclohex-3-ene-1-carboxylate + CO2. The protein operates within quinol/quinone metabolism; 1,4-dihydroxy-2-naphthoate biosynthesis; 1,4-dihydroxy-2-naphthoate from chorismate: step 2/7. Its pathway is quinol/quinone metabolism; menaquinone biosynthesis. Its function is as follows. Catalyzes the thiamine diphosphate-dependent decarboxylation of 2-oxoglutarate and the subsequent addition of the resulting succinic semialdehyde-thiamine pyrophosphate anion to isochorismate to yield 2-succinyl-5-enolpyruvyl-6-hydroxy-3-cyclohexene-1-carboxylate (SEPHCHC). In Bacillus cereus (strain ZK / E33L), this protein is 2-succinyl-5-enolpyruvyl-6-hydroxy-3-cyclohexene-1-carboxylate synthase.